Consider the following 287-residue polypeptide: uncharacterized protein (287 aa).

10 helical membrane-spanning segments follow: residues 4–24 (TTNG…SLPA), 36–56 (FLTV…LLIF), 66–86 (LISL…LTAL), 93–113 (SAHA…FGVL), 122–142 (VFWI…LIQG), 148–168 (LGDA…AEGA), 179–199 (VISW…FFFT), 208–228 (VPAL…GFVF), 237–259 (GIAA…ASVI), and 264–286 (VGWA…RRFA). 2 EamA domains span residues 16–139 (LIFS…GFAL) and 158–284 (VVCG…AARR).

The protein belongs to the EamA transporter family.

It localises to the cell membrane. This is an uncharacterized protein from Bacillus subtilis (strain 168).